A 626-amino-acid chain; its full sequence is MSKKGRSKGEKPEMEMDPVQMANEELRAKLTSIQIEFQQEKSKVGKLRERLQEAKLEREQEQRRHTAYISELRAKLHEEKTKELQALREVLIRQHEQEAARTAKIKEGELQRLQATLNVLRDGAADKVKTALLADARDEARRAFDGERLRLQQEILELKAARKQAEEALSNCMQADKTKAADLRAAYQAHQDEVHRIKRECERDIRRLMDEIKGKDRVILALEKELGVQTGQTQKLLLQKEALDEQLVQVREAERYHGSPKRELPPGIGDMAELMGVQDQHMDERDVRRFQLKIAELNSVIRKLEDRNTLLADERNELLKRSRETEVQLKPLVEKNKRMNKKNEDLLQSIQRMEEKIKNLTRENVEMKEKLSAQASLKRHTSLNDLSLTRDEQEIEFLRLQVLEQQHVIDDLSLERERLLRSRRHRGKGLKPPKKHVVETFFGFDEESVDSETLSETSCNTDRTDRAPATPEEDLDDTTTREEADLRFCQLTREYQALQRAYALLQEQVGGTLDAEREARTREQLQADLLRCQAKIEDLEKLLVEKGQDSKWVEEKQLLIRTNQDLLEKIYRLEMEENQLKNEMQDAKDQNELLEFRVLELEVRDSICCKLSNGADILFEPKLKFM.

Residues 1–365 (MSKKGRSKGE…KIKNLTRENV (365 aa)) form a mediates association with microtubules region. Coiled-coil stretches lie at residues 19 to 254 (VQMA…REAE) and 284 to 413 (ERDV…DDLS). The segment at 365–626 (VEMKEKLSAQ…ILFEPKLKFM (262 aa)) is mediates interaction with TYK2 and GABBR1. S382 is modified (phosphoserine). The span at 452-461 (ETLSETSCNT) shows a compositional bias: polar residues. Residues 452-480 (ETLSETSCNTDRTDRAPATPEEDLDDTTT) are disordered. Residue T470 is modified to Phosphothreonine. The stretch at 490-604 (QLTREYQALQ…EFRVLELEVR (115 aa)) forms a coiled coil.

It belongs to the JAKMIP family. As to quaternary structure, homodimer. Forms a complex with GABBR1 and KIF5B/kinesin-1. Interacts with JAK1 and TYK2. Post-translationally, phosphorylated.

It is found in the cytoplasm. Its subcellular location is the cytoskeleton. The protein localises to the membrane. In terms of biological role, associates with microtubules and may play a role in the microtubule-dependent transport of the GABA-B receptor. May play a role in JAK1 signaling and regulate microtubule cytoskeleton rearrangements. In Bos taurus (Bovine), this protein is Janus kinase and microtubule-interacting protein 1 (JAKMIP1).